The following is a 581-amino-acid chain: Pyridine nucleotide-disulfide oxidoreductase domain-containing protein 2 (581 aa).

38–71 contributes to the FAD binding site; sequence VVIGAGHNGLVVAAYLQRLGVNTAVFERRHVIGG.

Belongs to the carotenoid/retinoid oxidoreductase family. Interacts with COX5B; this interaction may contribute to localize PYROXD2 to the inner face of the inner mitochondrial membrane.

It localises to the mitochondrion matrix. Functionally, probable oxidoreductase that may play a role as regulator of mitochondrial function. This chain is Pyridine nucleotide-disulfide oxidoreductase domain-containing protein 2, found in Pongo abelii (Sumatran orangutan).